Here is an 84-residue protein sequence, read N- to C-terminus: Large ribosomal subunit protein uL23 (84 aa).

It belongs to the universal ribosomal protein uL23 family. As to quaternary structure, part of the 50S ribosomal subunit. Contacts protein L29.

Its function is as follows. Binds to 23S rRNA. One of the proteins that surrounds the polypeptide exit tunnel on the outside of the ribosome. The protein is Large ribosomal subunit protein uL23 of Haloquadratum walsbyi (strain DSM 16790 / HBSQ001).